A 369-amino-acid chain; its full sequence is Bi-functional coumaroyl CoA and feruloyl CoA ortho-hydroxylase Diox1 (369 aa).

The region spanning 209–319 is the Fe2OG dioxygenase domain; it reads IREPMLVGSR…RISVPLFVNP (111 aa). Tyrosine 225 contributes to the 2-oxoglutarate binding site. Fe cation contacts are provided by histidine 240, aspartate 242, and histidine 300. Residues arginine 310 and serine 312 each contribute to the 2-oxoglutarate site.

It belongs to the iron/ascorbate-dependent oxidoreductase family. L-ascorbate serves as cofactor. Fe(2+) is required as a cofactor.

It catalyses the reaction (E)-4-coumaroyl-CoA + 2-oxoglutarate + O2 = (E)-2,4-dihydroxycinnamoyl-CoA + succinate + CO2. It carries out the reaction (E)-feruloyl-CoA + 2-oxoglutarate + O2 = (E)-6-hydroxyferuloyl-CoA + succinate + CO2. The protein operates within phenylpropanoid metabolism. In terms of biological role, 2-oxoglutarate (OG)- and Fe(II)-dependent dioxygenase (2OGD) involved in scopoletin and umbelliferone biosynthesis. Converts feruloyl CoA into 6'-hydroxyferuloyl CoA, and p-coumaroyl CoA into 2,4-dihydroxycinnamoyl-CoA. This Ruta graveolens (Common rue) protein is Bi-functional coumaroyl CoA and feruloyl CoA ortho-hydroxylase Diox1.